A 169-amino-acid polypeptide reads, in one-letter code: Transcription antitermination protein NusB (169 aa).

It belongs to the NusB family.

Its function is as follows. Involved in transcription antitermination. Required for transcription of ribosomal RNA (rRNA) genes. Binds specifically to the boxA antiterminator sequence of the ribosomal RNA (rrn) operons. This chain is Transcription antitermination protein NusB, found in Rhodococcus opacus (strain B4).